The sequence spans 299 residues: Dermonecrotic toxin LiSicTox-alphaIVA1 (299 aa).

The N-terminal stretch at Met-1–Gly-18 is a signal peptide. The active site involves His-30. The Mg(2+) site is built by Glu-50 and Asp-52. His-66 functions as the Nucleophile in the catalytic mechanism. 2 cysteine pairs are disulfide-bonded: Cys-70/Cys-76 and Cys-72/Cys-217. Asp-110 is a binding site for Mg(2+).

Belongs to the arthropod phospholipase D family. Class II subfamily. Class IIa sub-subfamily. Mg(2+) serves as cofactor. Expressed by the venom gland.

The protein localises to the secreted. It catalyses the reaction an N-(acyl)-sphingosylphosphocholine = an N-(acyl)-sphingosyl-1,3-cyclic phosphate + choline. It carries out the reaction an N-(acyl)-sphingosylphosphoethanolamine = an N-(acyl)-sphingosyl-1,3-cyclic phosphate + ethanolamine. The catalysed reaction is a 1-acyl-sn-glycero-3-phosphocholine = a 1-acyl-sn-glycero-2,3-cyclic phosphate + choline. The enzyme catalyses a 1-acyl-sn-glycero-3-phosphoethanolamine = a 1-acyl-sn-glycero-2,3-cyclic phosphate + ethanolamine. Its function is as follows. Dermonecrotic toxins cleave the phosphodiester linkage between the phosphate and headgroup of certain phospholipids (sphingolipid and lysolipid substrates), forming an alcohol (often choline) and a cyclic phosphate. This toxin acts on sphingomyelin (SM) with high activity. It may also act on ceramide phosphoethanolamine (CPE), lysophosphatidylcholine (LPC) and lysophosphatidylethanolamine (LPE), but not on lysophosphatidylserine (LPS), and lysophosphatidylglycerol (LPG). It acts by transphosphatidylation, releasing exclusively cyclic phosphate products as second products. Has hemolytic activity in human erythrocytes in a dose-dependent manner. In vivo, this toxin induces dermonecrosis, edema, hemorrhage, massive inflammatory response, as well as vascular permeability. In addition, thrombus formation has also been detected in dermal blood vessels. It also induces platelet aggregation. It is noteworthy that a Glu-248 replaces the Asp present in paralogs, without decrease in catalytic and hemolytic activities. The polypeptide is Dermonecrotic toxin LiSicTox-alphaIVA1 (Loxosceles intermedia (Brown spider)).